Reading from the N-terminus, the 235-residue chain is Purine nucleoside phosphorylase DeoD-type (235 aa).

His4 provides a ligand contact to a purine D-ribonucleoside. Phosphate is bound by residues Gly20, Arg24, Arg43, and 87–90 (RVGT). A purine D-ribonucleoside is bound by residues 179 to 181 (EME) and 203 to 204 (SD). The Proton donor role is filled by Asp204.

It belongs to the PNP/UDP phosphorylase family. As to quaternary structure, homohexamer; trimer of homodimers.

The enzyme catalyses a purine D-ribonucleoside + phosphate = a purine nucleobase + alpha-D-ribose 1-phosphate. It catalyses the reaction a purine 2'-deoxy-D-ribonucleoside + phosphate = a purine nucleobase + 2-deoxy-alpha-D-ribose 1-phosphate. Functionally, catalyzes the reversible phosphorolytic breakdown of the N-glycosidic bond in the beta-(deoxy)ribonucleoside molecules, with the formation of the corresponding free purine bases and pentose-1-phosphate. The sequence is that of Purine nucleoside phosphorylase DeoD-type from Exiguobacterium sibiricum (strain DSM 17290 / CCUG 55495 / CIP 109462 / JCM 13490 / 255-15).